The primary structure comprises 405 residues: Acetate kinase (405 aa).

Asn7 contributes to the Mg(2+) binding site. Lys14 serves as a coordination point for ATP. Arg92 contributes to the substrate binding site. Asp149 (proton donor/acceptor) is an active-site residue. ATP contacts are provided by residues 209-213 (HLGNG) and 284-286 (DMR). Glu389 is a Mg(2+) binding site.

Belongs to the acetokinase family. As to quaternary structure, homodimer. Requires Mg(2+) as cofactor. It depends on Mn(2+) as a cofactor.

It is found in the cytoplasm. It carries out the reaction acetate + ATP = acetyl phosphate + ADP. It functions in the pathway metabolic intermediate biosynthesis; acetyl-CoA biosynthesis; acetyl-CoA from acetate: step 1/2. Its function is as follows. Catalyzes the formation of acetyl phosphate from acetate and ATP. Can also catalyze the reverse reaction. The sequence is that of Acetate kinase from Borrelia garinii subsp. bavariensis (strain ATCC BAA-2496 / DSM 23469 / PBi) (Borreliella bavariensis).